The following is a 117-amino-acid chain: MILTALSSAIALLVPIIILGAAWVLASRSTEDREKSSPFECGFDPKSTARIPFSTRFFLLAIIFIVFDIEIVLLMPLPTILHTSDVFTTVTTSVLFLMILLIGLIHEWKEGSLDWSS.

Transmembrane regions (helical) follow at residues alanine 5–leucine 25, phenylalanine 57–leucine 77, and valine 86–histidine 106.

Belongs to the complex I subunit 3 family.

The protein localises to the mitochondrion membrane. The enzyme catalyses a ubiquinone + NADH + 5 H(+)(in) = a ubiquinol + NAD(+) + 4 H(+)(out). Its function is as follows. Core subunit of the mitochondrial membrane respiratory chain NADH dehydrogenase (Complex I) that is believed to belong to the minimal assembly required for catalysis. Complex I functions in the transfer of electrons from NADH to the respiratory chain. The immediate electron acceptor for the enzyme is believed to be ubiquinone. The protein is NADH-ubiquinone oxidoreductase chain 3 (ND3) of Lumbricus terrestris (Common earthworm).